We begin with the raw amino-acid sequence, 345 residues long: Nuclear distribution protein nudE-like 1-A (345 aa).

Positions 19 to 190 form a coiled coil; sequence WRELSKRLKQ…LAVRERQTDG (172 aa). Residues 182-192 show a composition bias toward basic and acidic residues; it reads AVRERQTDGTR. 2 disordered regions span residues 182-206 and 326-345; these read AVRERQTDGTRKSAPSSPTLDCDKT and PPGVLGSRPPSPPGMLPLSV. Pro residues predominate over residues 334–345; that stretch reads PPSPPGMLPLSV.

This sequence belongs to the nudE family. Post-translationally, phosphorylated in mitosis.

The protein localises to the cytoplasm. The protein resides in the cytoskeleton. It is found in the microtubule organizing center. It localises to the centrosome. Its subcellular location is the spindle. In terms of biological role, required for organization of the cellular microtubule array and microtubule anchoring at the centrosome. Positively regulates the activity of the minus-end directed microtubule motor protein dynein. May enhance dynein-mediated microtubule sliding by targeting dynein to the microtubule plus end. Positively regulates lysosome peripheral distribution and ruffled border formation in osteoclasts. This chain is Nuclear distribution protein nudE-like 1-A (ndel1-a), found in Xenopus laevis (African clawed frog).